The primary structure comprises 171 residues: Calcium-binding allergen Ole e 8 (171 aa).

EF-hand domains lie at 16 to 51 (QEPN…LGSN), 52 to 87 (TSKE…ETDP), 92 to 127 (GGEN…LGER), and 128 to 163 (YAEH…KSGN). Residues aspartate 29, asparagine 31, aspartate 33, lysine 35, glutamate 40, aspartate 65, aspartate 67, aspartate 69, glutamate 76, aspartate 105, aspartate 107, asparagine 109, glutamate 116, aspartate 141, aspartate 143, aspartate 145, tyrosine 147, and glutamate 152 each contribute to the Ca(2+) site.

Homodimer. As to expression, expressed in pollen.

This chain is Calcium-binding allergen Ole e 8, found in Olea europaea (Common olive).